The primary structure comprises 391 residues: S-adenosylmethionine synthase (391 aa).

Histidine 14 lines the ATP pocket. Aspartate 16 contacts Mg(2+). Residue glutamate 42 coordinates K(+). The L-methionine site is built by glutamate 55 and glutamine 98. The segment at 98 to 108 is flexible loop; that stretch reads QSVDIAMGVDE. ATP-binding positions include 172–174, 238–239, aspartate 247, 253–254, alanine 270, and lysine 274; these read DGK, RF, and RK. L-methionine is bound at residue aspartate 247. Lysine 278 lines the L-methionine pocket.

The protein belongs to the AdoMet synthase family. In terms of assembly, homotetramer; dimer of dimers. Requires Mg(2+) as cofactor. K(+) serves as cofactor.

The protein resides in the cytoplasm. The enzyme catalyses L-methionine + ATP + H2O = S-adenosyl-L-methionine + phosphate + diphosphate. Its pathway is amino-acid biosynthesis; S-adenosyl-L-methionine biosynthesis; S-adenosyl-L-methionine from L-methionine: step 1/1. Its function is as follows. Catalyzes the formation of S-adenosylmethionine (AdoMet) from methionine and ATP. The overall synthetic reaction is composed of two sequential steps, AdoMet formation and the subsequent tripolyphosphate hydrolysis which occurs prior to release of AdoMet from the enzyme. This chain is S-adenosylmethionine synthase, found in Clostridium botulinum (strain Hall / ATCC 3502 / NCTC 13319 / Type A).